Consider the following 119-residue polypeptide: Large ribosomal subunit protein bL20 (119 aa).

The protein belongs to the bacterial ribosomal protein bL20 family.

Functionally, binds directly to 23S ribosomal RNA and is necessary for the in vitro assembly process of the 50S ribosomal subunit. It is not involved in the protein synthesizing functions of that subunit. In Shewanella amazonensis (strain ATCC BAA-1098 / SB2B), this protein is Large ribosomal subunit protein bL20.